The primary structure comprises 310 residues: Ribosomal RNA small subunit methyltransferase H (310 aa).

Residues 33 to 35 (GGH), Asp52, Phe79, Asp98, and Gln105 each bind S-adenosyl-L-methionine.

It belongs to the methyltransferase superfamily. RsmH family.

The protein resides in the cytoplasm. The enzyme catalyses cytidine(1402) in 16S rRNA + S-adenosyl-L-methionine = N(4)-methylcytidine(1402) in 16S rRNA + S-adenosyl-L-homocysteine + H(+). Its function is as follows. Specifically methylates the N4 position of cytidine in position 1402 (C1402) of 16S rRNA. The chain is Ribosomal RNA small subunit methyltransferase H from Campylobacter jejuni subsp. jejuni serotype O:6 (strain 81116 / NCTC 11828).